The following is a 177-amino-acid chain: ATP synthase subunit delta (177 aa).

Belongs to the ATPase delta chain family. As to quaternary structure, F-type ATPases have 2 components, F(1) - the catalytic core - and F(0) - the membrane proton channel. F(1) has five subunits: alpha(3), beta(3), gamma(1), delta(1), epsilon(1). F(0) has three main subunits: a(1), b(2) and c(10-14). The alpha and beta chains form an alternating ring which encloses part of the gamma chain. F(1) is attached to F(0) by a central stalk formed by the gamma and epsilon chains, while a peripheral stalk is formed by the delta and b chains.

The protein localises to the cell inner membrane. Its function is as follows. F(1)F(0) ATP synthase produces ATP from ADP in the presence of a proton or sodium gradient. F-type ATPases consist of two structural domains, F(1) containing the extramembraneous catalytic core and F(0) containing the membrane proton channel, linked together by a central stalk and a peripheral stalk. During catalysis, ATP synthesis in the catalytic domain of F(1) is coupled via a rotary mechanism of the central stalk subunits to proton translocation. This protein is part of the stalk that links CF(0) to CF(1). It either transmits conformational changes from CF(0) to CF(1) or is implicated in proton conduction. The sequence is that of ATP synthase subunit delta from Yersinia enterocolitica serotype O:8 / biotype 1B (strain NCTC 13174 / 8081).